A 644-amino-acid chain; its full sequence is Threonine--tRNA ligase (644 aa).

The region spanning 1–61 (MNVSIEGQML…DGTTTIEPVY (61 aa)) is the TGS domain. Residues 241–532 (DHRKLGQQLD…LIEQYAGAFP (292 aa)) form a catalytic region. Residues Cys333, His384, and His509 each contribute to the Zn(2+) site.

Belongs to the class-II aminoacyl-tRNA synthetase family. As to quaternary structure, homodimer. It depends on Zn(2+) as a cofactor.

It is found in the cytoplasm. It catalyses the reaction tRNA(Thr) + L-threonine + ATP = L-threonyl-tRNA(Thr) + AMP + diphosphate + H(+). Its function is as follows. Catalyzes the attachment of threonine to tRNA(Thr) in a two-step reaction: L-threonine is first activated by ATP to form Thr-AMP and then transferred to the acceptor end of tRNA(Thr). Also edits incorrectly charged L-seryl-tRNA(Thr). The chain is Threonine--tRNA ligase from Nitratidesulfovibrio vulgaris (strain ATCC 29579 / DSM 644 / CCUG 34227 / NCIMB 8303 / VKM B-1760 / Hildenborough) (Desulfovibrio vulgaris).